A 211-amino-acid polypeptide reads, in one-letter code: PITH domain-containing protein 1 (211 aa).

In terms of domain architecture, PITH spans 20 to 192 (EPPEQRGLAY…EVTICNYEAS (173 aa)). Residue Y189 is modified to Phosphotyrosine.

This sequence belongs to the PITHD1 family. As to expression, down-regulated in primary acute myeloid leukemia (AML) patients.

The protein resides in the cytoplasm. Functionally, promotes megakaryocyte differentiation by up-regulating RUNX1 expression. Regulates RUNX1 expression by activating the proximal promoter of the RUNX1 gene and by enhancing the translation activity of an internal ribosome entry site (IRES) element in the RUNX1 gene. In Homo sapiens (Human), this protein is PITH domain-containing protein 1 (PITHD1).